A 946-amino-acid polypeptide reads, in one-letter code: DDB1- and CUL4-associated factor 5 (946 aa).

WD repeat units lie at residues 51 to 91 (GHFG…HSRV), 99 to 139 (EHHS…LDVF), 140 to 180 (AHED…HGEP), 185 to 225 (NYPS…SSLL), 277 to 317 (FNSC…EAGG), and 331 to 370 (GHRSIVNQVRFNPHTYMICSSGVEKIIKIWSPYKQPGCTG). The interval 449–478 (GVSERSGYTDSESSASLPRSPPPTVDESAD) is disordered. A compositionally biased stretch (polar residues) spans 454 to 465 (SGYTDSESSASL). A Phosphothreonine modification is found at Thr-500. Disordered stretches follow at residues 527–656 (LSNE…MESV), 675–860 (SNNK…ELET), and 894–946 (CETP…KLKT). A phosphoserine mark is found at Ser-531 and Ser-533. A compositionally biased stretch (acidic residues) spans 531–544 (SDSEENVCEAELDT). Residues 555-567 (PEDGSSSPSSSTS) are compositionally biased toward low complexity. A compositionally biased stretch (basic residues) spans 579-592 (ATTRQRNAMRRRQK). The span at 625–638 (LSPSPDSSPERSAS) shows a compositional bias: low complexity. Residues Ser-626, Ser-628, and Ser-645 each carry the phosphoserine modification. A compositionally biased stretch (basic and acidic residues) spans 691–701 (EGRAGTSHKDN). 2 stretches are compositionally biased toward polar residues: residues 760-769 (GTSQDTNNSG) and 808-819 (TLNSASGNCPRT).

Interacts with DDB1, CUL4A or CUL4B. Interacts with L3MBTL3. Interacts with SOX2. Interacts with DNMT1. Interacts with E2F1.

The protein operates within protein modification; protein ubiquitination. In terms of biological role, is a substrate receptor for the CUL4-DDB1 E3 ubiquitin-protein ligase complex (CRL4), involved in the ubiquitination of a set of methylated non-histone proteins, including SOX2. The complex CRL4-DCAF5 is also involved in the ubiquitination of methylated DNMT1 and E2F1. The chain is DDB1- and CUL4-associated factor 5 (Dcaf5) from Mus musculus (Mouse).